A 629-amino-acid polypeptide reads, in one-letter code: Dehydrogenase pyvF (629 aa).

The first 22 residues, 1–22, serve as a signal peptide directing secretion; it reads MAGSPFTTALLSAWTLSTVAVG. FAD contacts are provided by residues 61 to 62 and 82 to 83; these read AS and EA. The N-linked (GlcNAc...) asparagine glycan is linked to N92. 144–147 is an FAD binding site; it reads NLMA. N-linked (GlcNAc...) asparagine glycosylation is found at N172, N182, N256, N284, N312, and N421. Catalysis depends on H552, which acts as the Proton acceptor. FAD is bound by residues A586 and 597–598; that span reads PL.

The protein belongs to the GMC oxidoreductase family. As to quaternary structure, homodimer. The cofactor is FAD.

It functions in the pathway secondary metabolite biosynthesis. Its function is as follows. Dehydrogenase; part of the gene cluster that mediates the biosynthesis of pyranoviolin A, a pyranonigrin analog with a C-3 methoxy group. Initially, the PKS portion of pyvA synthesizes C-10 carbon chain from 5 molecules of malonyl-CoA, which is then condensed with the thiolation (T) domain-bound glycine activated by the adenylation (A) domain. The subsequent chain release by Dieckmann condensation (DKC) could be catalyzed by the TE domain present at the C-terminus of pyvA and/or the alpha/beta hydrolase pyvD, installing the tetramic acid moiety. The FAD-dependent monooxygenase pyvC next epoxidizes one of the olefins of the polyketide part, and the epoxide ring-opening induces the dihydro-gamma-pyrone ring formation. The cytochrome P450 monooxygeanse pyvB would be responsible for the 2 consecutive reactions, in which the dihydro-gamma-pyrone is oxidized to gamma-pyrone and C-7 is hydroxylated to yield pyranonigrin F. Finally, the O-methyltransferase pyvH methylates the C-3 hydroxy group to complete the biosynthesis. The protein is Dehydrogenase pyvF of Aspergillus violaceofuscus (strain CBS 115571).